We begin with the raw amino-acid sequence, 290 residues long: D-tagatose 3-epimerase (290 aa).

Residue Cys66 participates in substrate binding. The Proton donor/acceptor role is filled by Glu152. Residue Glu152 coordinates Mn(2+). Substrate-binding positions include Glu158 and 185–188; that span reads DTFH. 2 residues coordinate Mn(2+): Asp185 and His211. Residue Arg217 coordinates substrate. The Proton donor/acceptor role is filled by Glu246. Glu246 is a Mn(2+) binding site.

The protein belongs to the hyi family. Homodimer. Mn(2+) is required as a cofactor.

It catalyses the reaction keto-D-tagatose = keto-D-sorbose. It carries out the reaction D-allulose = keto-D-fructose. The catalysed reaction is D-ribulose = D-xylulose. With respect to regulation, strongly inhibited (about 90% of the enzyme activity) by Ag(+), Hg(2+) and p-chloromercuribenzoic acid. Cu(2+) and Zn(2+) inhibit about 60% of the enzyme activity. Catalyzes the epimerization of various ketoses at the C(3) position. It is able to interconvert D-tagatose and D-ribulose to D-sorbose and D-xylulose, respectively. The enzyme is also able to accept other ketopentoses such as D-psicose with lower efficiency. The sequence is that of D-tagatose 3-epimerase from Pseudomonas cichorii.